The chain runs to 204 residues: Imidazoleglycerol-phosphate dehydratase (204 aa).

This sequence belongs to the imidazoleglycerol-phosphate dehydratase family.

The protein resides in the cytoplasm. The catalysed reaction is D-erythro-1-(imidazol-4-yl)glycerol 3-phosphate = 3-(imidazol-4-yl)-2-oxopropyl phosphate + H2O. The protein operates within amino-acid biosynthesis; L-histidine biosynthesis; L-histidine from 5-phospho-alpha-D-ribose 1-diphosphate: step 6/9. This is Imidazoleglycerol-phosphate dehydratase from Rhodococcus jostii (strain RHA1).